We begin with the raw amino-acid sequence, 139 residues long: Actin-depolymerizing factor 1 (139 aa).

One can recognise an ADF-H domain in the interval 5–139 (SSGLAVNDEC…SLDIVRSRTN (135 aa)).

The protein belongs to the actin-binding proteins ADF family. In terms of tissue distribution, expressed in pollen.

Functionally, actin-depolymerizing protein. Severs actin filaments (F-actin) and binds to actin monomers. This is Actin-depolymerizing factor 1 (ADF1) from Zea mays (Maize).